Here is a 150-residue protein sequence, read N- to C-terminus: Monooxygenase nsrS (150 aa).

Belongs to the avfA family.

The protein operates within secondary metabolite biosynthesis. In terms of biological role, monooxygenase; part of the gene cluster that mediates the biosynthesis of the tetrahydroxanthone dimer neosartorin, which exhibits antibacterial activity. The two different monomeric units appear to be synthesized by the same set of enzymes, among which the Baeyer-Villiger monooxygenase nsrF is the key enzyme for the divergence of the biosynthetic routes. The pathway begins with the synthesis of atrochrysone thioester by the polyketide synthase nsrB. The atrochrysone carboxyl ACP thioesterase nsrC then breaks the thioester bond and releases the atrochrysone carboxylic acid from AacuL. Atrochrysone carboxylic acid is decarboxylated by the decarboxylase nsrE, and oxidized by the anthrone oxygenase nsrD to yield emodin. Emodin is then reduced to emodin hydroquinone by the oxidoreductase nsrR. A-ring reduction by the short chain dehydrogenase nsrJ, dehydration by the scytalone dehydratase-like protein nsrI and probable spontaneous re-oxidation, results in overall deoxygenation to chrysophanol. The Baeyer-Villiger monooxygenase nsrF accepts chrysophanol as a substrate to insert one oxygen atom at two different positions to yield the precursors of both monomric units. NsrF is promiscuous/flexible in interacting with the 2 (non methylated and methylated) aromatic rings of chrysophanol, thus diverging the biosynthetic pathway at this point. After the hydrolysis of the lactones, methylesterification by the methyltransferase nsrG yields respectively moniliphenone and 2,2',6'-trihydroxy-4-methyl-6-methoxya-cyldiphenylmethanone. The next steps are the hydroxylation by the FAD-dependent monooxygenase nsrK, followed by isomerization by the monooxygenase nsrQ. The short chain dehydrogenase/reductase nsrO then catalyzes the C-5 ketoreduction to give the xanthone skeleton of blennolide C and 5-acetylblennolide A. The acetyltransferase nsrL has a strict substrate specificity and uses only blennolide A but not blennolide C to yield 5-acetylblennolide A as the single-acetylated product. In the final step of the biosynthesis, the heterodimerization of the 2 xanthones, blennolide C and 5-acetylblennolide A, is catalyzed by the cytochrome P450 monooxygenase nsrP. NsrP can utilize at least three different xanthones as its substrates to perform the dimerization reaction. The chain is Monooxygenase nsrS from Aspergillus novofumigatus (strain IBT 16806).